We begin with the raw amino-acid sequence, 222 residues long: MDARELAKYIDHTNLKAFATREDIKRLCEEAKEYGFYAVCVNPYRVKDAAEFLKGTDIKIASVVGFPLGATFTETKVQEAIMAVRNGADEIDMVMNIGAMKDGDYGFVERDIREVVEAVHPMGAKVKVIIETCYLSDEEKIKACELAKKAGADFVKTSTGFGTAGAKVEDVKLMRSVVGNDMGVKAAGGIHNAKQAIAMIEAGATRIGASRSVEIIETLELI.

The active-site Proton donor/acceptor is the D92. Residue K156 is the Schiff-base intermediate with acetaldehyde of the active site. The active-site Proton donor/acceptor is the K185.

The protein belongs to the DeoC/FbaB aldolase family. DeoC type 1 subfamily. In terms of assembly, homodimer.

The protein localises to the cytoplasm. It carries out the reaction 2-deoxy-D-ribose 5-phosphate = D-glyceraldehyde 3-phosphate + acetaldehyde. It functions in the pathway carbohydrate degradation; 2-deoxy-D-ribose 1-phosphate degradation; D-glyceraldehyde 3-phosphate and acetaldehyde from 2-deoxy-alpha-D-ribose 1-phosphate: step 2/2. With respect to regulation, shows high stability to high concentrations of acetaldehyde. Its function is as follows. Catalyzes a reversible aldol reaction between acetaldehyde and D-glyceraldehyde 3-phosphate to generate 2-deoxy-D-ribose 5-phosphate. In Aciduliprofundum boonei (strain DSM 19572 / T469), this protein is Deoxyribose-phosphate aldolase.